We begin with the raw amino-acid sequence, 156 residues long: UPF0460 protein in nifX 3'region (156 aa).

This sequence belongs to the UPF0460 family.

The sequence is that of UPF0460 protein in nifX 3'region from Rhodobacter capsulatus (Rhodopseudomonas capsulata).